The sequence spans 311 residues: Solute carrier family 25 member 36-A (311 aa).

Solcar repeat units follow at residues Arg-4–Lys-108, Asp-116–Lys-203, and Ser-224–Leu-308. Transmembrane regions (helical) follow at residues Leu-7 to Leu-27, Phe-41 to Ala-57, Asn-111 to Thr-131, Met-180 to Ile-200, Phe-226 to Pro-246, and Gln-291 to Gly-311.

The protein belongs to the mitochondrial carrier (TC 2.A.29) family.

The protein resides in the mitochondrion inner membrane. The polypeptide is Solute carrier family 25 member 36-A (slc25a36a) (Danio rerio (Zebrafish)).